We begin with the raw amino-acid sequence, 313 residues long: DNA-directed RNA polymerase subunit alpha (313 aa).

The alpha N-terminal domain (alpha-NTD) stretch occupies residues 1 to 227; the sequence is MMLDVAPPRF…DFFGLFAEGY (227 aa). Residues 242–313 are alpha C-terminal domain (alpha-CTD); sequence RPVITDERPI…YGYTLESGRE (72 aa).

This sequence belongs to the RNA polymerase alpha chain family. In terms of assembly, homodimer. The RNAP catalytic core consists of 2 alpha, 1 beta, 1 beta' and 1 omega subunit. When a sigma factor is associated with the core the holoenzyme is formed, which can initiate transcription.

It carries out the reaction RNA(n) + a ribonucleoside 5'-triphosphate = RNA(n+1) + diphosphate. Functionally, DNA-dependent RNA polymerase catalyzes the transcription of DNA into RNA using the four ribonucleoside triphosphates as substrates. This Rubrobacter xylanophilus (strain DSM 9941 / JCM 11954 / NBRC 16129 / PRD-1) protein is DNA-directed RNA polymerase subunit alpha.